The chain runs to 185 residues: ATP-dependent protease subunit HslV (185 aa).

Residue Thr-2 is part of the active site. Residues Gly-157, Cys-160, and Thr-163 each coordinate Na(+).

It belongs to the peptidase T1B family. HslV subfamily. In terms of assembly, a double ring-shaped homohexamer of HslV is capped on each side by a ring-shaped HslU homohexamer. The assembly of the HslU/HslV complex is dependent on binding of ATP.

It is found in the cytoplasm. The enzyme catalyses ATP-dependent cleavage of peptide bonds with broad specificity.. Its activity is regulated as follows. Allosterically activated by HslU binding. Protease subunit of a proteasome-like degradation complex believed to be a general protein degrading machinery. The sequence is that of ATP-dependent protease subunit HslV from Vibrio cholerae serotype O1 (strain ATCC 39315 / El Tor Inaba N16961).